The chain runs to 167 residues: UPF0225 protein VV1_2912 (167 aa).

This sequence belongs to the UPF0225 family.

This Vibrio vulnificus (strain CMCP6) protein is UPF0225 protein VV1_2912.